A 300-amino-acid chain; its full sequence is Protoheme IX farnesyltransferase (300 aa).

The next 9 membrane-spanning stretches (helical) occupy residues 26 to 46, 54 to 74, 102 to 122, 123 to 143, 150 to 170, 177 to 197, 224 to 244, 246 to 266, and 279 to 299; these read VVQL…PGLP, IAWA…FNCI, LLFS…LVNP, LTMW…TLIL, NIVI…AAMT, ALIL…ALAL, VLLY…YGMS, WPYL…GFAL, and FRFS…DHYL.

This sequence belongs to the UbiA prenyltransferase family. Protoheme IX farnesyltransferase subfamily.

The protein localises to the cell inner membrane. The catalysed reaction is heme b + (2E,6E)-farnesyl diphosphate + H2O = Fe(II)-heme o + diphosphate. It functions in the pathway porphyrin-containing compound metabolism; heme O biosynthesis; heme O from protoheme: step 1/1. Converts heme B (protoheme IX) to heme O by substitution of the vinyl group on carbon 2 of heme B porphyrin ring with a hydroxyethyl farnesyl side group. This is Protoheme IX farnesyltransferase from Verminephrobacter eiseniae (strain EF01-2).